A 367-amino-acid chain; its full sequence is Aspartate-semialdehyde dehydrogenase (367 aa).

NADP(+) is bound by residues R10–V13, T37–S38, and Q73. A phosphate-binding site is contributed by R102. C135 serves as the catalytic Acyl-thioester intermediate. C135 bears the S-cysteinyl cysteine; in inhibited form mark. Q162 contacts substrate. NADP(+) contacts are provided by residues S165–A169, R173, and P193. E241 contacts substrate. K244 contacts phosphate. Substrate is bound at residue R267. The active-site Proton acceptor is H274. Q350 contacts NADP(+).

The protein belongs to the aspartate-semialdehyde dehydrogenase family. Homodimer.

It carries out the reaction L-aspartate 4-semialdehyde + phosphate + NADP(+) = 4-phospho-L-aspartate + NADPH + H(+). Its pathway is amino-acid biosynthesis; L-lysine biosynthesis via DAP pathway; (S)-tetrahydrodipicolinate from L-aspartate: step 2/4. It participates in amino-acid biosynthesis; L-methionine biosynthesis via de novo pathway; L-homoserine from L-aspartate: step 2/3. It functions in the pathway amino-acid biosynthesis; L-threonine biosynthesis; L-threonine from L-aspartate: step 2/5. Its activity is regulated as follows. Is inhibited by L- and D-cystine, and by other cystine derivatives, via the formation of a covalently bound cysteine at the active site Cys-135. Functionally, catalyzes the NADPH-dependent formation of L-aspartate-semialdehyde (L-ASA) by the reductive dephosphorylation of L-aspartyl-4-phosphate. In Escherichia coli (strain K12), this protein is Aspartate-semialdehyde dehydrogenase.